The chain runs to 328 residues: DNA-directed RNA polymerase subunit alpha (328 aa).

Positions 1–244 are alpha N-terminal domain (alpha-NTD); the sequence is MEKFLKYEIK…EHLNPIVSVN (244 aa). Residues 261-328 form an alpha C-terminal domain (alpha-CTD) region; that stretch reads KVKSFAKQIE…VQELGLKFRS (68 aa).

This sequence belongs to the RNA polymerase alpha chain family. Homodimer. The RNAP catalytic core consists of 2 alpha, 1 beta, 1 beta' and 1 omega subunit. When a sigma factor is associated with the core the holoenzyme is formed, which can initiate transcription.

The enzyme catalyses RNA(n) + a ribonucleoside 5'-triphosphate = RNA(n+1) + diphosphate. Functionally, DNA-dependent RNA polymerase catalyzes the transcription of DNA into RNA using the four ribonucleoside triphosphates as substrates. The sequence is that of DNA-directed RNA polymerase subunit alpha from Mycoplasma genitalium (strain ATCC 33530 / DSM 19775 / NCTC 10195 / G37) (Mycoplasmoides genitalium).